The chain runs to 187 residues: UPF0301 protein SO_3346 (187 aa).

It belongs to the UPF0301 (AlgH) family.

The protein is UPF0301 protein SO_3346 of Shewanella oneidensis (strain ATCC 700550 / JCM 31522 / CIP 106686 / LMG 19005 / NCIMB 14063 / MR-1).